The primary structure comprises 492 residues: Differentially expressed in FDCP 8 homolog (492 aa).

Over residues 38–51 (GLGGSGSTGSGSEA) the composition is skewed to gly residues. The segment at 38–62 (GLGGSGSTGSGSEAGGSEESGPQGA) is disordered. 2 consecutive Phorbol-ester/DAG-type zinc fingers follow at residues 161 to 214 (PHHG…KRVC) and 400 to 453 (DHIR…NMIC). The interval 468-492 (RMKSTEDDDDDDDGVATDDDVTAAE) is disordered. Positions 473–492 (EDDDDDDDGVATDDDVTAAE) are enriched in acidic residues.

This sequence belongs to the DEF8 family.

This Drosophila melanogaster (Fruit fly) protein is Differentially expressed in FDCP 8 homolog.